The following is a 44-amino-acid chain: Photosystem I reaction center subunit IX (44 aa).

A helical transmembrane segment spans residues Tyr7–Ile27.

It belongs to the PsaJ family.

It is found in the plastid. The protein localises to the chloroplast thylakoid membrane. May help in the organization of the PsaE and PsaF subunits. The protein is Photosystem I reaction center subunit IX of Pelargonium hortorum (Common geranium).